The chain runs to 265 residues: Bidirectional sugar transporter NEC1 (265 aa).

The Extracellular segment spans residues 1-8 (MAQLRADD). The chain crosses the membrane as a helical span at residues 9–29 (LSFIFGLLGNIVSFMVFLAPV). Positions 11–97 (FIFGLLGNIV…SLFLFYAPRK (87 aa)) constitute a MtN3/slv 1 domain. The Cytoplasmic portion of the chain corresponds to 30–44 (PTFYKIYKRKSSEGY). Residues 45-65 (QAIPYMVALFSAGLLLYYAYL) form a helical membrane-spanning segment. Residues 66–71 (RKNAYL) are Extracellular-facing. A helical transmembrane segment spans residues 72-92 (IVSINGFGCAIELTYISLFLF). Residues 93-103 (YAPRKSKIFTG) lie on the Cytoplasmic side of the membrane. A helical transmembrane segment spans residues 104–124 (WLMLLELGALGMVMPITYLLA). Residues 125-130 (EGSHRV) lie on the Extracellular side of the membrane. The chain crosses the membrane as a helical span at residues 131-151 (MIVGWICAAINVAVFAAPLSI). One can recognise a MtN3/slv 2 domain in the interval 132–216 (IVGWICAAIN…LLYFVYKDSK (85 aa)). Over 152–164 (MRQVIKTKSVEFM) the chain is Cytoplasmic. Residues 165 to 185 (PFTLSLFLTLCATMWFFYGFF) traverse the membrane as a helical segment. Residues 186 to 190 (KKDFY) lie on the Extracellular side of the membrane. Residues 191–211 (IAFPNILGFLFGIVQMLLYFV) traverse the membrane as a helical segment. Topologically, residues 212 to 265 (YKDSKRIDDEKSDPVREATKSKEGVEIIINIEDDNSDNALQSMEKDFSRLRTSK) are cytoplasmic.

The protein belongs to the SWEET sugar transporter family. In terms of assembly, forms homooligomers and/or heterooligomers. As to expression, highly expressed in nectary tissue and weakly in the stamen, especially in stomium cells and in the upper part of the filaments.

The protein localises to the cell membrane. Its function is as follows. Mediates both low-affinity uptake and efflux of sugar across the plasma membrane. Promotes the formation of phloem bundles in mid-veins. Probably involved in the development of stomium cells that control anther opening time. Required for pollen viability. This Petunia hybrida (Petunia) protein is Bidirectional sugar transporter NEC1 (NEC1).